The following is a 372-amino-acid chain: Small ribosomal subunit protein mS77 (rPPR2) (372 aa).

A mitochondrion-targeting transit peptide spans 1 to 28 (MKSFLLSRQAIHRISLLSSKTPTFCRNF). The tract at residues 240 to 265 (DNSIRESETVDGEVEEEGFVPSDEVE) is disordered. Positions 248 to 257 (TVDGEVEEEG) are enriched in acidic residues.

As to quaternary structure, component of the mitochondrial ribosome small subunit.

The protein resides in the mitochondrion. In terms of biological role, required for karyogamy during female gametophyte development, when the two polar nuclei fuse to form the diploid central cell nucleus. The sequence is that of Small ribosomal subunit protein mS77 (rPPR2) from Arabidopsis thaliana (Mouse-ear cress).